Reading from the N-terminus, the 103-residue chain is Large ribosomal subunit protein bL21 (103 aa).

It belongs to the bacterial ribosomal protein bL21 family. Part of the 50S ribosomal subunit. Contacts protein L20.

Its function is as follows. This protein binds to 23S rRNA in the presence of protein L20. This Mycobacterium marinum (strain ATCC BAA-535 / M) protein is Large ribosomal subunit protein bL21.